A 1082-amino-acid chain; its full sequence is DNA-directed RNA polymerase subunit beta (1082 aa).

The protein belongs to the RNA polymerase beta chain family. In terms of assembly, in plastids the minimal PEP RNA polymerase catalytic core is composed of four subunits: alpha, beta, beta', and beta''. When a (nuclear-encoded) sigma factor is associated with the core the holoenzyme is formed, which can initiate transcription.

The protein localises to the plastid. Its subcellular location is the chloroplast. It catalyses the reaction RNA(n) + a ribonucleoside 5'-triphosphate = RNA(n+1) + diphosphate. DNA-dependent RNA polymerase catalyzes the transcription of DNA into RNA using the four ribonucleoside triphosphates as substrates. The sequence is that of DNA-directed RNA polymerase subunit beta from Euglena gracilis.